The following is a 592-amino-acid chain: Vacuolin-B (592 aa).

Polar residues predominate over residues methionine 1–serine 30. The segment at methionine 1 to asparagine 35 is disordered. The stretch at lysine 480–glutamine 534 forms a coiled coil. The interval aspartate 491 to glutamate 555 is oligomerization domain.

It belongs to the vacuolin family. In terms of assembly, homotrimer.

The protein resides in the endosome membrane. Its subcellular location is the lysosome membrane. Negative regulator of late steps of the endocytic pathway. The sequence is that of Vacuolin-B (vacB) from Dictyostelium discoideum (Social amoeba).